We begin with the raw amino-acid sequence, 281 residues long: Putative pyruvate, phosphate dikinase regulatory protein (281 aa).

Position 153-160 (G153–T160) interacts with ADP.

This sequence belongs to the pyruvate, phosphate/water dikinase regulatory protein family. PDRP subfamily.

The enzyme catalyses N(tele)-phospho-L-histidyl/L-threonyl-[pyruvate, phosphate dikinase] + ADP = N(tele)-phospho-L-histidyl/O-phospho-L-threonyl-[pyruvate, phosphate dikinase] + AMP + H(+). The catalysed reaction is N(tele)-phospho-L-histidyl/O-phospho-L-threonyl-[pyruvate, phosphate dikinase] + phosphate + H(+) = N(tele)-phospho-L-histidyl/L-threonyl-[pyruvate, phosphate dikinase] + diphosphate. In terms of biological role, bifunctional serine/threonine kinase and phosphorylase involved in the regulation of the pyruvate, phosphate dikinase (PPDK) by catalyzing its phosphorylation/dephosphorylation. In Bdellovibrio bacteriovorus (strain ATCC 15356 / DSM 50701 / NCIMB 9529 / HD100), this protein is Putative pyruvate, phosphate dikinase regulatory protein.